The primary structure comprises 667 residues: E3 ubiquitin-protein ligase Midline-1 (667 aa).

An RING-type zinc finger spans residues 10-60 (CPICLELLEDPLLLPCAHSLCFNCAHRILVSHCATNEPVESINAFQCPTCR). 2 positions are modified to phosphoserine: Ser92 and Ser96. 2 B box-type zinc fingers span residues 116-165 (KVLC…IEPI) and 172-212 (GLMC…VAAL). Zn(2+)-binding residues include Cys119, Cys122, Cys134, Cys137, Cys142, Cys145, His150, His159, Cys175, His178, Cys198, and His204. Positions 205–264 (RDHQVAALSERYDKLKQNLESNLTNLIKRNTELETLLAKLIQTCQHVEVNASRQEAKLTE) form a coiled coil. The COS domain maps to 320–379 (LKENDHARFLQTAKNITERVSMATASSQVLIPEINLNDTFDTFALDFSREKKLLECLDYL). Positions 381-484 (APNPPTIREE…EPGKLKTNSQ (104 aa)) constitute a Fibronectin type-III domain. Residues 471 to 485 (SRSSEPGKLKTNSQP) show a composition bias toward polar residues. The interval 471–524 (SRSSEPGKLKTNSQPFKLDPKSAHRKLKVSHDNLTVERDESSSKKSHTPERFTS) is disordered. The B30.2/SPRY domain maps to 482–659 (NSQPFKLDPK…IITGLPIPDH (178 aa)). Positions 499-520 (VSHDNLTVERDESSSKKSHTPE) are enriched in basic and acidic residues. Position 511 is a phosphoserine (Ser511).

Belongs to the TRIM/RBCC family. As to quaternary structure, homodimer or heterodimer with MID2. Interacts with IGBP1.

The protein resides in the cytoplasm. It localises to the cytoskeleton. The enzyme catalyses S-ubiquitinyl-[E2 ubiquitin-conjugating enzyme]-L-cysteine + [acceptor protein]-L-lysine = [E2 ubiquitin-conjugating enzyme]-L-cysteine + N(6)-ubiquitinyl-[acceptor protein]-L-lysine.. Its function is as follows. Has E3 ubiquitin ligase activity towards IGBP1, promoting its monoubiquitination, which results in deprotection of the catalytic subunit of protein phosphatase PP2A, and its subsequent degradation by polyubiquitination. This is E3 ubiquitin-protein ligase Midline-1 (Mid1) from Mus spretus (Western Mediterranean mouse).